The chain runs to 211 residues: Beta-crystallin B3 (211 aa).

M1 bears the N-acetylmethionine mark. A2 is subject to N-acetylalanine; in Beta-crystallin B3, N-terminally processed. Residues 2-23 (AEQHGAPEQAAAGKSHGGLGGS) form an N-terminal arm region. Beta/gamma crystallin 'Greek key' domains lie at 24–63 (YKVT…QVES) and 64–108 (GPWL…RPLH). The segment at 109 to 113 (IDGPD) is connecting peptide. Beta/gamma crystallin 'Greek key' domains follow at residues 114-155 (HKLH…RVIN) and 156-198 (GTWV…RRIR). The C-terminal arm stretch occupies residues 200–211 (QKWHKRGCFLSS).

Belongs to the beta/gamma-crystallin family. In terms of assembly, homo/heterodimer, or complexes of higher-order. The structure of beta-crystallin oligomers seems to be stabilized through interactions between the N-terminal arms.

Its function is as follows. Crystallins are the dominant structural components of the vertebrate eye lens. This chain is Beta-crystallin B3 (Crybb3), found in Mus musculus (Mouse).